The primary structure comprises 118 residues: Large ribosomal subunit protein uL24 (118 aa).

Belongs to the universal ribosomal protein uL24 family. Part of the 50S ribosomal subunit.

In terms of biological role, one of two assembly initiator proteins, it binds directly to the 5'-end of the 23S rRNA, where it nucleates assembly of the 50S subunit. Functionally, one of the proteins that surrounds the polypeptide exit tunnel on the outside of the subunit. The polypeptide is Large ribosomal subunit protein uL24 (Prochlorococcus marinus (strain MIT 9215)).